A 267-amino-acid polypeptide reads, in one-letter code: Octanoyltransferase (267 aa).

The BPL/LPL catalytic domain occupies 77–265 (GTASELVWLV…AFESVFGPRQ (189 aa)). Substrate is bound by residues 116 to 123 (RGGEYTYH), 196 to 198 (AIG), and 209 to 211 (GIA). Cys-227 functions as the Acyl-thioester intermediate in the catalytic mechanism.

This sequence belongs to the LipB family.

It is found in the cytoplasm. The catalysed reaction is octanoyl-[ACP] + L-lysyl-[protein] = N(6)-octanoyl-L-lysyl-[protein] + holo-[ACP] + H(+). It participates in protein modification; protein lipoylation via endogenous pathway; protein N(6)-(lipoyl)lysine from octanoyl-[acyl-carrier-protein]: step 1/2. In terms of biological role, catalyzes the transfer of endogenously produced octanoic acid from octanoyl-acyl-carrier-protein onto the lipoyl domains of lipoate-dependent enzymes. Lipoyl-ACP can also act as a substrate although octanoyl-ACP is likely to be the physiological substrate. This Brucella suis biovar 1 (strain 1330) protein is Octanoyltransferase.